Here is a 318-residue protein sequence, read N- to C-terminus: MPKRGKKGAVAEDGDELRTEPEAKKSKTAAKKNDKEAAGEGPALYEDPPDQKTSPSGKPATLKICSWNVDGLRAWIKKKGLDWVKEEAPDILCLQETKCSENKLPAELQELPGLSHQYWSAPSDKEGYSGVGLLSRQCPLKVSYGIGEEEHDQEGRVIVAEFDSFVLVTAYVPNAGRGLVRLEYRQRWDEAFRKFLKGLASRKPLVLCGDLNVAHEEIDLRNPKGNKKNAGFTPQERQGFGELLQAVPLADSFRHLYPNTPYAYTFWTYMMNARSKNVGWRLDYFLLSHSLLPALCDSKIRSKALGSDHCPITLYLAL.

The tract at residues 1 to 33 (MPKRGKKGAVAEDGDELRTEPEAKKSKTAAKKN) is necessary for interaction with YBX1, binding to RNA, association together with NPM1 to rRNA, endoribonuclease activity on abasic RNA and localization in the nucleoli. Positions 1–60 (MPKRGKKGAVAEDGDELRTEPEAKKSKTAAKKNDKEAAGEGPALYEDPPDQKTSPSGKPA) are disordered. N6-acetyllysine; by EP300 is present on residues Lys-6 and Lys-7. Positions 8–13 (GAVAED) match the Nuclear localization signal (NLS) motif. Over residues 16 to 38 (ELRTEPEAKKSKTAAKKNDKEAA) the composition is skewed to basic and acidic residues. The tract at residues 23–33 (AKKSKTAAKKN) is necessary for interaction with NPM1 and for efficient rRNA binding. Lys-27, Lys-31, Lys-32, and Lys-35 each carry N6-acetyllysine. Ser-54 carries the post-translational modification Phosphoserine. The short motif at 64 to 80 (ICSWNVDGLRAWIKKKG) is the Nuclear export signal (NES) element. Cys-65 carries the post-translational modification S-nitrosocysteine; alternate. Cys-65 and Cys-93 are oxidised to a cystine. Asp-70 is a binding site for Mg(2+). Cys-93 carries the S-nitrosocysteine; alternate modification. Glu-96 is a binding site for Mg(2+). Tyr-171 is a catalytic residue. The residue at position 197 (Lys-197) is an N6-acetyllysine. Mg(2+) contacts are provided by Asp-210 and Asn-212. The Proton donor/acceptor role is filled by Asp-210. Position 233 is a phosphothreonine; by CDK5 (Thr-233). Positions 289–318 (HSLLPALCDSKIRSKALGSDHCPITLYLAL) are mitochondrial targeting sequence (MTS). Residue Asp-308 coordinates Mg(2+). Cys-310 carries the post-translational modification S-nitrosocysteine.

Belongs to the DNA repair enzymes AP/ExoA family. In terms of assembly, monomer. Homodimer; disulfide-linked. Component of the SET complex, composed of at least APEX1, SET, ANP32A, HMGB2, NME1 and TREX1. Associates with the dimer XRCC5/XRCC6 in a DNA-dependent manner. Interacts with SIRT1; the interaction is increased in the context of genotoxic stress. Interacts with HDAC1, HDAC2 and HDAC3; the interactions are not dependent on the APEX1 acetylation status. Interacts with XRCC1; the interaction is induced by SIRT1 and increased with the APEX1 acetylated form. Interacts with NPM1 (via N-terminal domain); the interaction is RNA-dependent and decreases in hydrogen peroxide-damaged cells. Interacts (via N-terminus) with YBX1 (via C-terminus); the interaction is increased in presence of APEX1 acetylated at Lys-6 and Lys-7. Interacts with HNRNPL; the interaction is DNA-dependent. Interacts (via N-terminus) with KPNA1 and KPNA2. Interacts with TXN; the interaction stimulates the FOS/JUN AP-1 complex DNA-binding activity in a redox-dependent manner. Interacts with GZMA, KRT8, MDM2, POLB, PRDX6, PRPF19, RPLP0, TOMM20 and WDR77. Binds to CDK5. Mg(2+) is required as a cofactor. Requires Mn(2+) as cofactor. Post-translationally, phosphorylated. Phosphorylation by kinase PKC or casein kinase CK2 results in enhanced redox activity that stimulates binding of the FOS/JUN AP-1 complex to its cognate binding site. AP-endodeoxyribonuclease activity is not affected by CK2-mediated phosphorylation. Phosphorylation of Thr-233 by CDK5 in response to MPP(+)/MPTP (1-methyl-4-phenylpyridinium) reduces AP-endodeoxyribonuclease activity resulting in accumulation of DNA damage and contributing to neuronal death. Acetylated on Lys-6 and Lys-7. Acetylation is increased by the transcriptional coactivator EP300 acetyltransferase, genotoxic agents like H(2)O(2) and methyl methanesulfonate (MMS). Acetylation increases its binding affinity to the negative calcium response element (nCaRE) DNA promoter. The acetylated form induces a stronger binding of YBX1 to the Y-box sequence in the MDR1 promoter than the unacetylated form. Deacetylated on lysines. Lys-6 and Lys-7 are deacetylated by SIRT1. In terms of processing, cleaved at Lys-31 by granzyme A to create the mitochondrial form; leading in reduction of binding to DNA, AP endodeoxyribonuclease activity, redox activation of transcription factors and to enhanced cell death. Cleaved by granzyme K; leading to intracellular ROS accumulation and enhanced cell death after oxidative stress. Post-translationally, cys-69 and Cys-93 are nitrosylated in response to nitric oxide (NO) and lead to the exposure of the nuclear export signal (NES). Ubiquitinated by MDM2; leading to translocation to the cytoplasm and proteasomal degradation.

Its subcellular location is the nucleus. The protein localises to the nucleolus. It localises to the nucleus speckle. The protein resides in the endoplasmic reticulum. It is found in the cytoplasm. Its subcellular location is the mitochondrion. The catalysed reaction is a deoxyribonucleotide-2'-deoxyribose-5'-monophosphate-DNA + H2O = a 5'-end 2'-deoxyribose-5'-monophosphate-DNA + a 3'-end 2'-deoxyribonucleotide-DNA + H(+). It catalyses the reaction Exonucleolytic cleavage in the 3'- to 5'-direction to yield nucleoside 5'-phosphates.. It carries out the reaction a 3'-end 2'-deoxyribonucleotide-3'-phosphoglycolate-DNA + H2O = 2-phosphoglycolate + a 3'-end 2'-deoxyribonucleotide-DNA + H(+). The enzyme catalyses a 3'-end 2'-deoxyribonucleotide-8-oxoguanine-DNA + H2O = 8-oxo-dGMP + a 3'-end 2'-deoxyribonucleotide-DNA + H(+). NPM1 stimulates endodeoxyribonuclease activity on double-stranded DNA with AP sites, but inhibits endoribonuclease activity on single-stranded RNA containing AP sites. Multifunctional protein that plays a central role in the cellular response to oxidative stress. The two major activities of APEX1 are DNA repair and redox regulation of transcriptional factors. Functions as an apurinic/apyrimidinic (AP) endodeoxyribonuclease in the base excision repair (BER) pathway of DNA lesions induced by oxidative and alkylating agents. Initiates repair of AP sites in DNA by catalyzing hydrolytic incision of the phosphodiester backbone immediately adjacent to the damage, generating a single-strand break with 5'-deoxyribose phosphate and 3'-hydroxyl ends. Also incises at AP sites in the DNA strand of DNA/RNA hybrids, single-stranded DNA regions of R-loop structures, and single-stranded RNA molecules. Operates at switch sites of immunoglobulin (Ig) constant regions where it mediates Ig isotype class switch recombination. Processes AP sites induced by successive action of AICDA and UNG. Generates staggered nicks in opposite DNA strands resulting in the formation of double-strand DNA breaks that are finally resolved via non-homologous end joining repair pathway. Has 3'-5' exodeoxyribonuclease activity on mismatched deoxyribonucleotides at the 3' termini of nicked or gapped DNA molecules during short-patch BER. Possesses DNA 3' phosphodiesterase activity capable of removing lesions (such as phosphoglycolate and 8-oxoguanine) blocking the 3' side of DNA strand breaks. Also acts as an endoribonuclease involved in the control of single-stranded RNA metabolism. Plays a role in regulating MYC mRNA turnover by preferentially cleaving in between UA and CA dinucleotides of the MYC coding region determinant (CRD). In association with NMD1, plays a role in the rRNA quality control process during cell cycle progression. Acts as a loading factor for POLB onto non-incised AP sites in DNA and stimulates the 5'-terminal deoxyribose 5'-phosphate (dRp) excision activity of POLB. Exerts reversible nuclear redox activity to regulate DNA binding affinity and transcriptional activity of transcriptional factors by controlling the redox status of their DNA-binding domain, such as the FOS/JUN AP-1 complex after exposure to IR. Involved in calcium-dependent down-regulation of parathyroid hormone (PTH) expression by binding to negative calcium response elements (nCaREs). Together with HNRNPL or the dimer XRCC5/XRCC6, associates with nCaRE, acting as an activator of transcriptional repression. May also play a role in the epigenetic regulation of gene expression by participating in DNA demethylation. Stimulates the YBX1-mediated MDR1 promoter activity, when acetylated at Lys-6 and Lys-7, leading to drug resistance. Plays a role in protection from granzyme-mediated cellular repair leading to cell death. Binds DNA and RNA. Associates, together with YBX1, on the MDR1 promoter. Together with NPM1, associates with rRNA. This chain is DNA repair nuclease/redox regulator APEX1 (APEX1), found in Pan paniscus (Pygmy chimpanzee).